The following is a 241-amino-acid chain: Outer membrane protein assembly factor BamD (241 aa).

An N-terminal signal peptide occupies residues 1–17 (MKYQTLSGLLALSLLFG). The N-palmitoyl cysteine moiety is linked to residue C18. The S-diacylglycerol cysteine moiety is linked to residue C18.

It belongs to the BamD family. In terms of assembly, part of the Bam complex.

The protein localises to the cell outer membrane. Its function is as follows. Part of the outer membrane protein assembly complex, which is involved in assembly and insertion of beta-barrel proteins into the outer membrane. The protein is Outer membrane protein assembly factor BamD of Vibrio cholerae serotype O1 (strain ATCC 39315 / El Tor Inaba N16961).